Here is a 209-residue protein sequence, read N- to C-terminus: Probable nicotinate-nucleotide adenylyltransferase (209 aa).

This sequence belongs to the NadD family.

The catalysed reaction is nicotinate beta-D-ribonucleotide + ATP + H(+) = deamido-NAD(+) + diphosphate. It participates in cofactor biosynthesis; NAD(+) biosynthesis; deamido-NAD(+) from nicotinate D-ribonucleotide: step 1/1. In terms of biological role, catalyzes the reversible adenylation of nicotinate mononucleotide (NaMN) to nicotinic acid adenine dinucleotide (NaAD). The chain is Probable nicotinate-nucleotide adenylyltransferase from Idiomarina loihiensis (strain ATCC BAA-735 / DSM 15497 / L2-TR).